The chain runs to 96 residues: Glutamyl-tRNA(Gln) amidotransferase subunit C (96 aa).

Belongs to the GatC family. In terms of assembly, heterotrimer of A, B and C subunits.

The enzyme catalyses L-glutamyl-tRNA(Gln) + L-glutamine + ATP + H2O = L-glutaminyl-tRNA(Gln) + L-glutamate + ADP + phosphate + H(+). The catalysed reaction is L-aspartyl-tRNA(Asn) + L-glutamine + ATP + H2O = L-asparaginyl-tRNA(Asn) + L-glutamate + ADP + phosphate + 2 H(+). Its function is as follows. Allows the formation of correctly charged Asn-tRNA(Asn) or Gln-tRNA(Gln) through the transamidation of misacylated Asp-tRNA(Asn) or Glu-tRNA(Gln) in organisms which lack either or both of asparaginyl-tRNA or glutaminyl-tRNA synthetases. The reaction takes place in the presence of glutamine and ATP through an activated phospho-Asp-tRNA(Asn) or phospho-Glu-tRNA(Gln). The sequence is that of Glutamyl-tRNA(Gln) amidotransferase subunit C from Pseudomonas aeruginosa (strain ATCC 15692 / DSM 22644 / CIP 104116 / JCM 14847 / LMG 12228 / 1C / PRS 101 / PAO1).